Consider the following 480-residue polypeptide: Aspartyl/glutamyl-tRNA(Asn/Gln) amidotransferase subunit B (480 aa).

It belongs to the GatB/GatE family. GatB subfamily. Heterotrimer of A, B and C subunits.

It carries out the reaction L-glutamyl-tRNA(Gln) + L-glutamine + ATP + H2O = L-glutaminyl-tRNA(Gln) + L-glutamate + ADP + phosphate + H(+). The catalysed reaction is L-aspartyl-tRNA(Asn) + L-glutamine + ATP + H2O = L-asparaginyl-tRNA(Asn) + L-glutamate + ADP + phosphate + 2 H(+). In terms of biological role, allows the formation of correctly charged Asn-tRNA(Asn) or Gln-tRNA(Gln) through the transamidation of misacylated Asp-tRNA(Asn) or Glu-tRNA(Gln) in organisms which lack either or both of asparaginyl-tRNA or glutaminyl-tRNA synthetases. The reaction takes place in the presence of glutamine and ATP through an activated phospho-Asp-tRNA(Asn) or phospho-Glu-tRNA(Gln). This Streptococcus pneumoniae (strain ATCC 700669 / Spain 23F-1) protein is Aspartyl/glutamyl-tRNA(Asn/Gln) amidotransferase subunit B.